We begin with the raw amino-acid sequence, 337 residues long: Mannitol dehydrogenase (337 aa).

The Zn(2+) site is built by Cys27, His49, Cys80, Cys83, Cys86, Cys94, and Cys143.

Belongs to the zinc-containing alcohol dehydrogenase family. It depends on Zn(2+) as a cofactor.

It carries out the reaction D-mannitol + NAD(+) = D-mannose + NADH + H(+). In terms of biological role, oxidizes mannitol to mannose. Provides the initial step by which translocated mannitol is committed to central metabolism and, by regulating mannitol pool size, is important in regulating salt tolerance at the cellular level. This Petroselinum crispum (Parsley) protein is Mannitol dehydrogenase (ELI3).